Reading from the N-terminus, the 335-residue chain is Acetyl-coenzyme A carboxylase carboxyl transferase subunit alpha (335 aa).

The region spanning 40–294 (QLETLATRRR…KASIERHLSE (255 aa)) is the CoA carboxyltransferase C-terminal domain.

The protein belongs to the AccA family. As to quaternary structure, acetyl-CoA carboxylase is a heterohexamer composed of biotin carboxyl carrier protein (AccB), biotin carboxylase (AccC) and two subunits each of ACCase subunit alpha (AccA) and ACCase subunit beta (AccD).

The protein localises to the cytoplasm. It catalyses the reaction N(6)-carboxybiotinyl-L-lysyl-[protein] + acetyl-CoA = N(6)-biotinyl-L-lysyl-[protein] + malonyl-CoA. It participates in lipid metabolism; malonyl-CoA biosynthesis; malonyl-CoA from acetyl-CoA: step 1/1. Its function is as follows. Component of the acetyl coenzyme A carboxylase (ACC) complex. First, biotin carboxylase catalyzes the carboxylation of biotin on its carrier protein (BCCP) and then the CO(2) group is transferred by the carboxyltransferase to acetyl-CoA to form malonyl-CoA. The chain is Acetyl-coenzyme A carboxylase carboxyl transferase subunit alpha from Prochlorococcus marinus (strain MIT 9515).